The sequence spans 267 residues: Type III pantothenate kinase (267 aa).

6-13 contacts ATP; that stretch reads DVRNTHTT. Position 109-112 (109-112) interacts with substrate; sequence GADR. Asp-111 (proton acceptor) is an active-site residue. Asp-131 provides a ligand contact to K(+). Ser-134 is an ATP binding site. Thr-186 is a binding site for substrate.

The protein belongs to the type III pantothenate kinase family. As to quaternary structure, homodimer. NH4(+) serves as cofactor. It depends on K(+) as a cofactor.

The protein localises to the cytoplasm. The catalysed reaction is (R)-pantothenate + ATP = (R)-4'-phosphopantothenate + ADP + H(+). The protein operates within cofactor biosynthesis; coenzyme A biosynthesis; CoA from (R)-pantothenate: step 1/5. Functionally, catalyzes the phosphorylation of pantothenate (Pan), the first step in CoA biosynthesis. The polypeptide is Type III pantothenate kinase (Mycobacterium sp. (strain JLS)).